A 121-amino-acid chain; its full sequence is uncharacterized protein (121 aa).

It to E.coli YcjD and H.influenzae HI_1162.

This is an uncharacterized protein from Haemophilus influenzae (strain ATCC 51907 / DSM 11121 / KW20 / Rd).